Consider the following 227-residue polypeptide: YEATS domain-containing protein 4 (227 aa).

One can recognise a YEATS domain in the interval 15-158 (RVKGVTIVKP…AMMQQLLTTS (144 aa)). A Glycyl lysine isopeptide (Lys-Gly) (interchain with G-Cter in SUMO2) cross-link involves residue Lys-37. Positions 93–97 (WGEFE) are diacetylated histone H3 binding. The interval 163–227 (LGAYKHETEF…LEEDDQAKDI (65 aa)) is interaction with MLLT10. Residues 168–227 (HETEFAELEVKTREKLEAAKKKTSFEIAELKERLKASRETINCLKNEIRKLEEDDQAKDI) form an interaction with TACC1 region. Residues 178-226 (KTREKLEAAKKKTSFEIAELKERLKASRETINCLKNEIRKLEEDDQAKD) adopt a coiled-coil conformation.

In terms of assembly, component of numerous complexes with chromatin remodeling and histone acetyltransferase activity. Component of the NuA4 histone acetyltransferase complex which contains the catalytic subunit KAT5/TIP60 and the subunits EP400, TRRAP/PAF400, BRD8/SMAP, EPC1, DMAP1/DNMAP1, RUVBL1/TIP49, RUVBL2, ING3, actin, ACTL6A/BAF53A, MORF4L1/MRG15, MORF4L2/MRGX, MRGBP, YEATS4/GAS41, VPS72/YL1 and MEAF6. The NuA4 complex interacts with MYC and the adenovirus E1A protein. Component of a NuA4-related complex which contains EP400, TRRAP/PAF400, SRCAP, BRD8/SMAP, EPC1, DMAP1/DNMAP1, RUVBL1/TIP49, RUVBL2, actin, ACTL6A/BAF53A, VPS72 and YEATS4/GAS41. Interacts with MLLT10/AF10. Also interacts with the SWI/SNF component SMARCB1/BAF47, TACC1 and TACC2, and the nuclear matrix protein NUMA1. As to expression, expressed in brain, heart, kidney, liver, lung, pancreas, placenta and skeletal muscle.

The protein localises to the nucleus. Its function is as follows. Chromatin reader component of the NuA4 histone acetyltransferase (HAT) complex, a complex involved in transcriptional activation of select genes principally by acetylation of nucleosomal histones H4 and H2A. Specifically recognizes and binds acylated histone H3, with a preference for histone H3 diacetylated at 'Lys-18' and 'Lys-27' (H3K18ac and H3K27ac) or histone H3 diacetylated at 'Lys-14' and 'Lys-27' (H3K14ac and H3K27ac). Also able to recognize and bind crotonylated histone H3. May also recognize and bind histone H3 succinylated at 'Lys-122' (H3K122succ); additional evidences are however required to confirm this result in vivo. Plays a key role in histone variant H2AZ1/H2A.Z deposition into specific chromatin regions: recognizes and binds H3K14ac and H3K27ac on the promoters of actively transcribed genes and recruits NuA4-related complex to deposit H2AZ1/H2A.Z. H2AZ1/H2A.Z deposition is required for maintenance of embryonic stem cell. This Homo sapiens (Human) protein is YEATS domain-containing protein 4.